Consider the following 204-residue polypeptide: Nucleoside triphosphate pyrophosphatase (204 aa).

The Proton acceptor role is filled by Asp78.

It belongs to the Maf family. A divalent metal cation serves as cofactor.

It localises to the cytoplasm. It carries out the reaction a ribonucleoside 5'-triphosphate + H2O = a ribonucleoside 5'-phosphate + diphosphate + H(+). The catalysed reaction is a 2'-deoxyribonucleoside 5'-triphosphate + H2O = a 2'-deoxyribonucleoside 5'-phosphate + diphosphate + H(+). In terms of biological role, nucleoside triphosphate pyrophosphatase. May have a dual role in cell division arrest and in preventing the incorporation of modified nucleotides into cellular nucleic acids. The chain is Nucleoside triphosphate pyrophosphatase from Prochlorococcus marinus (strain MIT 9215).